The chain runs to 138 residues: L-ectoine synthase (138 aa).

It belongs to the ectoine synthase family.

It catalyses the reaction (2S)-4-acetamido-2-aminobutanoate = L-ectoine + H2O. The protein operates within amine and polyamine biosynthesis; ectoine biosynthesis; L-ectoine from L-aspartate 4-semialdehyde: step 3/3. Functionally, catalyzes the circularization of gamma-N-acetyl-alpha,gamma-diaminobutyric acid (ADABA) to ectoine (1,4,5,6-tetrahydro-2-methyl-4-pyrimidine carboxylic acid), which is an excellent osmoprotectant. The chain is L-ectoine synthase from Vibrio cholerae serotype O1 (strain ATCC 39541 / Classical Ogawa 395 / O395).